A 221-amino-acid polypeptide reads, in one-letter code: Small histidine-alanine-rich protein (221 aa).

The first 21 residues, 1 to 21 (MVSFSKNKILSAAVFASVLLL), serve as a signal peptide directing secretion. Basic and acidic residues predominate over residues 52–67 (AHAGDAHHAHHVADAH). Disordered regions lie at residues 52–141 (AHAG…AANA) and 180–221 (AHHD…HLHH). 2 consecutive repeat copies span residues 57 to 59 (AHH) and 60 to 62 (AHH). Residues 57–68 (AHHAHHVADAHH) form a 4 X 3 AA approximate tandem repeats of A-H-H region. A 1-3; approximate repeat occupies 63–65 (VAD). 13 tandem repeats follow at residues 66–68 (AHH), 69–74 (AHHAAN), 75–80 (AHHAAN), 81–86 (AHHAAN), 87–92 (AHHAAN), 93–98 (AHHAAN), 99–104 (AHHAAN), 105–110 (AHHAAN), 111–116 (AHHAAN), 117–122 (AHHAAN), 123–128 (AHHAAN), 129–134 (AHHAAN), and 135–140 (AHHAAN). The 13 X 6 AA approximate tandem repeats of A-H-H-A-A-N stretch occupies residues 69–146 (AHHAANAHHA…HAANAHHAAD (78 aa)). Residues 75-141 (AHHAANAHHA…AANAHHAANA (67 aa)) are compositionally biased toward low complexity. A 2-13; approximate repeat occupies 141 to 146 (AHHAAD). Tandem repeats lie at residues 176–180 (HHDDA), 181–185 (HHDGA), 186–190 (HHDDA), 191–195 (HHDGA), 196–200 (HHDGA), 201–205 (HHDGA), and 206–210 (HHDGA). Residues 176–210 (HHDDAHHDGAHHDDAHHDGAHHDGAHHDGAHHDGA) are 7 X 5 AA tandem repeats of H-H-D-[DG]-A. Basic and acidic residues predominate over residues 180 to 211 (AHHDGAHHDDAHHDGAHHDGAHHDGAHHDGAH).

The sequence is that of Small histidine-alanine-rich protein from Plasmodium falciparum (isolate FC27 / Papua New Guinea).